Here is a 215-residue protein sequence, read N- to C-terminus: Triosephosphate isomerase (215 aa).

The active-site Electrophile is the His-82. The active-site Proton acceptor is the Glu-153.

This sequence belongs to the triosephosphate isomerase family. In terms of assembly, homodimer.

The catalysed reaction is D-glyceraldehyde 3-phosphate = dihydroxyacetone phosphate. It participates in carbohydrate biosynthesis; gluconeogenesis. Its pathway is carbohydrate degradation; glycolysis; D-glyceraldehyde 3-phosphate from glycerone phosphate: step 1/1. The chain is Triosephosphate isomerase (Tpi) from Heliothis virescens (Tobacco budworm moth).